Reading from the N-terminus, the 664-residue chain is DNA ligase (664 aa).

NAD(+)-binding positions include 32–36 (DKDYD) and 80–81 (SL). Lys-122 acts as the N6-AMP-lysine intermediate in catalysis. The NAD(+) site is built by Arg-144, Glu-178, and Lys-314. Residues Cys-407, Cys-410, Cys-423, and Cys-429 each coordinate Zn(2+). A BRCT domain is found at 587–664 (IKENIFNGKT…SEEDFKNMIG (78 aa)).

Belongs to the NAD-dependent DNA ligase family. LigA subfamily. Requires Mg(2+) as cofactor. Mn(2+) is required as a cofactor.

The enzyme catalyses NAD(+) + (deoxyribonucleotide)n-3'-hydroxyl + 5'-phospho-(deoxyribonucleotide)m = (deoxyribonucleotide)n+m + AMP + beta-nicotinamide D-nucleotide.. Its function is as follows. DNA ligase that catalyzes the formation of phosphodiester linkages between 5'-phosphoryl and 3'-hydroxyl groups in double-stranded DNA using NAD as a coenzyme and as the energy source for the reaction. It is essential for DNA replication and repair of damaged DNA. The chain is DNA ligase from Clostridium novyi (strain NT).